The following is a 310-amino-acid chain: MIIVTGGAGFIGSNIVKALNNIGYKDILVVDNLKDGTKFVNLVDLDIADYMDKEDFVASIVAGDDMGDIDAIFHEGACSSTTEWDGKYMMDNNYQYSKDILHFCLDRSIPFLYASSAATYGGRTDNFIEDRQYEQPLNVYGYSKFLFDQYVREILPQADSQICGFRYFNVYGPREGHKGSMASVAFHLNNQINAGERPKLFAGSENFKRDFIYVGDVADVNLWFWQNGVSGIFNCGTGRAESFQAVADAVVDYHQSGPVEYIEFPEKLKGRYQAYTQADLTKLRAAGYGKPFKTVAEGVKEYLAWLNRSV.

Residues 10–11, 31–32, Lys38, Lys53, 75–79, and Asn92 contribute to the NADP(+) site; these read FI, DN, and EGACS. Tyr140 acts as the Proton acceptor in catalysis. Residue Lys144 participates in NADP(+) binding. Asn169 is a binding site for substrate. NADP(+) is bound by residues Val170 and Lys178. Lys178 functions as the Proton acceptor in the catalytic mechanism. Substrate contacts are provided by residues Ser180, His187, 201-204, Arg209, and Tyr272; that span reads FAGS.

This sequence belongs to the NAD(P)-dependent epimerase/dehydratase family. HldD subfamily. In terms of assembly, homopentamer. NADP(+) is required as a cofactor.

It catalyses the reaction ADP-D-glycero-beta-D-manno-heptose = ADP-L-glycero-beta-D-manno-heptose. It functions in the pathway nucleotide-sugar biosynthesis; ADP-L-glycero-beta-D-manno-heptose biosynthesis; ADP-L-glycero-beta-D-manno-heptose from D-glycero-beta-D-manno-heptose 7-phosphate: step 4/4. In terms of biological role, catalyzes the interconversion between ADP-D-glycero-beta-D-manno-heptose and ADP-L-glycero-beta-D-manno-heptose via an epimerization at carbon 6 of the heptose. This chain is ADP-L-glycero-D-manno-heptose-6-epimerase, found in Yersinia pseudotuberculosis serotype O:1b (strain IP 31758).